The following is a 410-amino-acid chain: 3-phosphoshikimate 1-carboxyvinyltransferase (410 aa).

3-phosphoshikimate is bound by residues K20, S21, and R25. K20 is a binding site for phosphoenolpyruvate. Residues G87 and R115 each coordinate phosphoenolpyruvate. The 3-phosphoshikimate site is built by S157, S158, Q159, S183, D293, and K320. Q159 lines the phosphoenolpyruvate pocket. D293 acts as the Proton acceptor in catalysis. The phosphoenolpyruvate site is built by R324, R365, and K391.

It belongs to the EPSP synthase family. Monomer.

It is found in the cytoplasm. The enzyme catalyses 3-phosphoshikimate + phosphoenolpyruvate = 5-O-(1-carboxyvinyl)-3-phosphoshikimate + phosphate. Its pathway is metabolic intermediate biosynthesis; chorismate biosynthesis. Its function is as follows. Catalyzes the transfer of the enolpyruvyl moiety of phosphoenolpyruvate (PEP) to the 5-hydroxyl of shikimate-3-phosphate (S3P) to produce enolpyruvyl shikimate-3-phosphate and inorganic phosphate. The polypeptide is 3-phosphoshikimate 1-carboxyvinyltransferase (Thermoplasma volcanium (strain ATCC 51530 / DSM 4299 / JCM 9571 / NBRC 15438 / GSS1)).